A 245-amino-acid polypeptide reads, in one-letter code: DNA polymerase sliding clamp (245 aa).

It belongs to the PCNA family. As to quaternary structure, homotrimer. The subunits circularize to form a toroid; DNA passes through its center. Replication factor C (RFC) is required to load the toroid on the DNA.

Its function is as follows. Sliding clamp subunit that acts as a moving platform for DNA processing. Responsible for tethering the catalytic subunit of DNA polymerase and other proteins to DNA during high-speed replication. This is DNA polymerase sliding clamp from Archaeoglobus fulgidus (strain ATCC 49558 / DSM 4304 / JCM 9628 / NBRC 100126 / VC-16).